A 724-amino-acid chain; its full sequence is Pediocin PA-1 transport/processing ATP-binding protein PedD (724 aa).

The region spanning 13-140 (QVDENDCGLA…KEWTQIAIII (128 aa)) is the Peptidase C39 domain. C19 is a catalytic residue. Helical transmembrane passes span 170 to 190 (IGLI…GAYF), 207 to 227 (LSLV…INYI), 284 to 304 (TTLT…FLAY), 307 to 327 (INLF…VWLF), 396 to 416 (IKAA…TFFV), and 426 to 446 (LLTY…IINL). In terms of domain architecture, ABC transmembrane type-1 spans 170 to 452 (IGLIITAAAI…IINLQPKLQA (283 aa)). The ABC transporter domain maps to 486–722 (IEVNHVSFNY…NGYYARLIHN (237 aa)). Residue 519–526 (GMSGSGKT) coordinates ATP.

It belongs to the ABC transporter superfamily. Pediocin PA-1 exporter (TC 3.A.1.112.2) family.

It localises to the cell membrane. Its function is as follows. Involved in the export process of the bacteriocin pediocin PA-1/AcH. Is also essential for pediocin production. This is Pediocin PA-1 transport/processing ATP-binding protein PedD (pedD) from Pediococcus acidilactici.